The sequence spans 269 residues: Cytochrome c oxidase subunit 3 (269 aa).

Transmembrane regions (helical) follow at residues Leu24 to Phe44, Gly46 to Phe66, Gly90 to Phe110, Pro138 to Ile160, Ala167 to Val187, Phe207 to Leu227, and Ile247 to Trp267.

This sequence belongs to the cytochrome c oxidase subunit 3 family. In terms of assembly, component of the cytochrome c oxidase (complex IV, CIV), a multisubunit enzyme composed of a catalytic core of 3 subunits and several supernumerary subunits. The complex exists as a monomer or a dimer and forms supercomplexes (SCs) in the inner mitochondrial membrane with ubiquinol-cytochrome c oxidoreductase (cytochrome b-c1 complex, complex III, CIII).

It is found in the mitochondrion inner membrane. The enzyme catalyses 4 Fe(II)-[cytochrome c] + O2 + 8 H(+)(in) = 4 Fe(III)-[cytochrome c] + 2 H2O + 4 H(+)(out). Functionally, component of the cytochrome c oxidase, the last enzyme in the mitochondrial electron transport chain which drives oxidative phosphorylation. The respiratory chain contains 3 multisubunit complexes succinate dehydrogenase (complex II, CII), ubiquinol-cytochrome c oxidoreductase (cytochrome b-c1 complex, complex III, CIII) and cytochrome c oxidase (complex IV, CIV), that cooperate to transfer electrons derived from NADH and succinate to molecular oxygen, creating an electrochemical gradient over the inner membrane that drives transmembrane transport and the ATP synthase. Cytochrome c oxidase is the component of the respiratory chain that catalyzes the reduction of oxygen to water. Electrons originating from reduced cytochrome c in the intermembrane space (IMS) are transferred via the dinuclear copper A center (CU(A)) of subunit 2 and heme A of subunit 1 to the active site in subunit 1, a binuclear center (BNC) formed by heme A3 and copper B (CU(B)). The BNC reduces molecular oxygen to 2 water molecules using 4 electrons from cytochrome c in the IMS and 4 protons from the mitochondrial matrix. This chain is Cytochrome c oxidase subunit 3 (cox3), found in Emericella nidulans (Aspergillus nidulans).